The following is a 454-amino-acid chain: Bifunctional protein GlmU (454 aa).

The segment at 1 to 230 (MSGRFAVILA…LSETMGVNDR (230 aa)) is pyrophosphorylase. Residues 9-12 (LAAG), Lys-23, Gln-73, and 78-79 (GT) contribute to the UDP-N-acetyl-alpha-D-glucosamine site. Asp-103 provides a ligand contact to Mg(2+). Positions 140, 155, 170, and 228 each coordinate UDP-N-acetyl-alpha-D-glucosamine. Asn-228 is a Mg(2+) binding site. The linker stretch occupies residues 231–251 (VALSQAEAAMRKRINEEWMRQ). The segment at 252–454 (GVTIIDPQTT…NKDNYVKKDV (203 aa)) is N-acetyltransferase. Positions 333 and 351 each coordinate UDP-N-acetyl-alpha-D-glucosamine. Catalysis depends on His-363, which acts as the Proton acceptor. Residues Tyr-366 and Asn-377 each coordinate UDP-N-acetyl-alpha-D-glucosamine. Residues 386-387 (NY), Ser-405, Ala-423, and Arg-440 contribute to the acetyl-CoA site.

The protein in the N-terminal section; belongs to the N-acetylglucosamine-1-phosphate uridyltransferase family. In the C-terminal section; belongs to the transferase hexapeptide repeat family. Homotrimer. Mg(2+) is required as a cofactor.

The protein localises to the cytoplasm. The enzyme catalyses alpha-D-glucosamine 1-phosphate + acetyl-CoA = N-acetyl-alpha-D-glucosamine 1-phosphate + CoA + H(+). It carries out the reaction N-acetyl-alpha-D-glucosamine 1-phosphate + UTP + H(+) = UDP-N-acetyl-alpha-D-glucosamine + diphosphate. It functions in the pathway nucleotide-sugar biosynthesis; UDP-N-acetyl-alpha-D-glucosamine biosynthesis; N-acetyl-alpha-D-glucosamine 1-phosphate from alpha-D-glucosamine 6-phosphate (route II): step 2/2. It participates in nucleotide-sugar biosynthesis; UDP-N-acetyl-alpha-D-glucosamine biosynthesis; UDP-N-acetyl-alpha-D-glucosamine from N-acetyl-alpha-D-glucosamine 1-phosphate: step 1/1. Its pathway is bacterial outer membrane biogenesis; LPS lipid A biosynthesis. In terms of biological role, catalyzes the last two sequential reactions in the de novo biosynthetic pathway for UDP-N-acetylglucosamine (UDP-GlcNAc). The C-terminal domain catalyzes the transfer of acetyl group from acetyl coenzyme A to glucosamine-1-phosphate (GlcN-1-P) to produce N-acetylglucosamine-1-phosphate (GlcNAc-1-P), which is converted into UDP-GlcNAc by the transfer of uridine 5-monophosphate (from uridine 5-triphosphate), a reaction catalyzed by the N-terminal domain. The sequence is that of Bifunctional protein GlmU from Shouchella clausii (strain KSM-K16) (Alkalihalobacillus clausii).